A 106-amino-acid chain; its full sequence is uncharacterized protein (106 aa).

A signal peptide spans Met-1–Ala-31. Positions Val-57–Thr-89 form a coiled coil.

This is an uncharacterized protein from Bacillus subtilis (strain 168).